Consider the following 395-residue polypeptide: Endophilin-B2 (395 aa).

Met-1 carries the post-translational modification N-acetylmethionine. Residues Met-1 to Phe-27 form a membrane-binding amphipathic helix region. At Ser-10 the chain carries Phosphoserine. A BAR domain is found at Glu-24–Gly-287. Coiled coils occupy residues Ile-116–Phe-132 and Ala-206–Glu-240. The region spanning Ser-335–Ser-395 is the SH3 domain. Phosphoserine is present on Ser-395.

It belongs to the endophilin family. In terms of assembly, homodimer, and heterodimer with SH3GLB1.

The protein resides in the cytoplasm. The polypeptide is Endophilin-B2 (SH3GLB2) (Bos taurus (Bovine)).